The following is a 390-amino-acid chain: 3-ketoacyl-CoA thiolase (390 aa).

Cys95 (acyl-thioester intermediate) is an active-site residue. Active-site proton acceptor residues include His346 and Cys376.

Belongs to the thiolase-like superfamily. Thiolase family. Heterotetramer of two alpha chains (FadB) and two beta chains (FadA).

It localises to the cytoplasm. It catalyses the reaction an acyl-CoA + acetyl-CoA = a 3-oxoacyl-CoA + CoA. It functions in the pathway lipid metabolism; fatty acid beta-oxidation. Catalyzes the final step of fatty acid oxidation in which acetyl-CoA is released and the CoA ester of a fatty acid two carbons shorter is formed. The chain is 3-ketoacyl-CoA thiolase from Acinetobacter baumannii (strain ATCC 17978 / DSM 105126 / CIP 53.77 / LMG 1025 / NCDC KC755 / 5377).